The sequence spans 160 residues: 3-hydroxyacyl-[acyl-carrier-protein] dehydratase FabZ (160 aa).

H63 is a catalytic residue.

This sequence belongs to the thioester dehydratase family. FabZ subfamily.

Its subcellular location is the cytoplasm. It catalyses the reaction a (3R)-hydroxyacyl-[ACP] = a (2E)-enoyl-[ACP] + H2O. Functionally, involved in unsaturated fatty acids biosynthesis. Catalyzes the dehydration of short chain beta-hydroxyacyl-ACPs and long chain saturated and unsaturated beta-hydroxyacyl-ACPs. This Xylella fastidiosa (strain M23) protein is 3-hydroxyacyl-[acyl-carrier-protein] dehydratase FabZ.